Reading from the N-terminus, the 346-residue chain is Selenide, water dikinase (346 aa).

Sec16 is a catalytic residue. Position 16 (Sec16) is a non-standard amino acid, selenocysteine. ATP-binding positions include Lys19 and 47–49 (TAD). Asp50 contributes to the Mg(2+) binding site. ATP-binding positions include Asp67, Asp90, and 138 to 140 (GHS). Asp90 is a binding site for Mg(2+). Asp226 lines the Mg(2+) pocket.

Belongs to the selenophosphate synthase 1 family. Class I subfamily. As to quaternary structure, homodimer. Requires Mg(2+) as cofactor.

It carries out the reaction hydrogenselenide + ATP + H2O = selenophosphate + AMP + phosphate + 2 H(+). Functionally, synthesizes selenophosphate from selenide and ATP. The chain is Selenide, water dikinase from Haemophilus influenzae (strain ATCC 51907 / DSM 11121 / KW20 / Rd).